The following is a 155-amino-acid chain: uncharacterized protein (155 aa).

Residues 7–154 form the N-acetyltransferase domain; sequence LQINYKTLEE…VWLPESVELQ (148 aa).

This is an uncharacterized protein from Brevibacillus brevis (strain 47 / JCM 6285 / NBRC 100599).